We begin with the raw amino-acid sequence, 113 residues long: Hydrogenase maturation factor HypA (113 aa).

H2 is a binding site for Ni(2+). Residues C73, C76, C89, and C92 each contribute to the Zn(2+) site.

Belongs to the HypA/HybF family.

Involved in the maturation of [NiFe] hydrogenases. Required for nickel insertion into the metal center of the hydrogenase. This is Hydrogenase maturation factor HypA from Cereibacter sphaeroides (strain ATCC 17023 / DSM 158 / JCM 6121 / CCUG 31486 / LMG 2827 / NBRC 12203 / NCIMB 8253 / ATH 2.4.1.) (Rhodobacter sphaeroides).